We begin with the raw amino-acid sequence, 343 residues long: Hydroxymethylglutaryl-CoA synthase (343 aa).

Residues aspartate 28 and alanine 29 each coordinate (3S)-3-hydroxy-3-methylglutaryl-CoA. Glutamate 80 functions as the Proton donor/acceptor in the catalytic mechanism. Cysteine 112 lines the (3S)-3-hydroxy-3-methylglutaryl-CoA pocket. Cysteine 112 acts as the Acyl-thioester intermediate in catalysis. Arginine 198 is a binding site for CoA. (3S)-3-hydroxy-3-methylglutaryl-CoA is bound by residues threonine 200 and histidine 233. Histidine 233 serves as the catalytic Proton donor/acceptor. Lysine 238 serves as a coordination point for CoA. (3S)-3-hydroxy-3-methylglutaryl-CoA-binding residues include arginine 242, asparagine 265, and serine 295.

It belongs to the thiolase-like superfamily. Archaeal HMG-CoA synthase family. As to quaternary structure, interacts with acetoacetyl-CoA thiolase that catalyzes the precedent step in the pathway and with a DUF35 protein. The acetoacetyl-CoA thiolase/HMG-CoA synthase complex channels the intermediate via a fused CoA-binding site, which allows for efficient coupling of the endergonic thiolase reaction with the exergonic HMGCS reaction.

The enzyme catalyses acetoacetyl-CoA + acetyl-CoA + H2O = (3S)-3-hydroxy-3-methylglutaryl-CoA + CoA + H(+). The protein operates within metabolic intermediate biosynthesis; (R)-mevalonate biosynthesis; (R)-mevalonate from acetyl-CoA: step 2/3. Functionally, catalyzes the condensation of acetyl-CoA with acetoacetyl-CoA to form 3-hydroxy-3-methylglutaryl-CoA (HMG-CoA). Functions in the mevalonate (MVA) pathway leading to isopentenyl diphosphate (IPP), a key precursor for the biosynthesis of isoprenoid compounds that are building blocks of archaeal membrane lipids. The polypeptide is Hydroxymethylglutaryl-CoA synthase (Archaeoglobus fulgidus (strain ATCC 49558 / DSM 4304 / JCM 9628 / NBRC 100126 / VC-16)).